Here is a 211-residue protein sequence, read N- to C-terminus: Orotidine 5'-phosphate decarboxylase (211 aa).

Residues Asp7, Lys29, 57-66 (DLKLADIPNT), Ser109, 162-172 (PGIGAQGGSPV), Gly185, and Arg186 contribute to the substrate site. Residue Lys59 is the Proton donor of the active site.

This sequence belongs to the OMP decarboxylase family. Type 1 subfamily. In terms of assembly, homodimer.

It catalyses the reaction orotidine 5'-phosphate + H(+) = UMP + CO2. It participates in pyrimidine metabolism; UMP biosynthesis via de novo pathway; UMP from orotate: step 2/2. Catalyzes the decarboxylation of orotidine 5'-monophosphate (OMP) to uridine 5'-monophosphate (UMP). The chain is Orotidine 5'-phosphate decarboxylase from Pyrococcus furiosus (strain ATCC 43587 / DSM 3638 / JCM 8422 / Vc1).